Consider the following 352-residue polypeptide: Isoflavone-7-O-methyltransferase 9 (352 aa).

Position 118-127 (118-127) interacts with substrate; the sequence is VLDPTLSGSY. Positions 196, 219, 239, 240, and 253 each coordinate S-adenosyl-L-methionine. Catalysis depends on His-257, which acts as the Proton acceptor.

It belongs to the class I-like SAM-binding methyltransferase superfamily. Cation-independent O-methyltransferase family. COMT subfamily. In terms of assembly, homodimer.

It carries out the reaction a 7-hydroxyisoflavone + S-adenosyl-L-methionine = a 7-methoxyisoflavone + S-adenosyl-L-homocysteine + H(+). The protein operates within phytoalexin biosynthesis; medicarpin biosynthesis. Functionally, transfers a methyl group to 7-hydroxyls of the isoflavones daidzein, genistein and 6,7,4'-trihydroxyisoflavone. Can also methylate (+)6a-hydroxymaackiain with lower efficiency. The polypeptide is Isoflavone-7-O-methyltransferase 9 (Medicago sativa (Alfalfa)).